The sequence spans 880 residues: Alanine--tRNA ligase (880 aa).

Zn(2+)-binding residues include H568, H572, C670, and H674.

Belongs to the class-II aminoacyl-tRNA synthetase family. Zn(2+) serves as cofactor.

It is found in the cytoplasm. It catalyses the reaction tRNA(Ala) + L-alanine + ATP = L-alanyl-tRNA(Ala) + AMP + diphosphate. Its function is as follows. Catalyzes the attachment of alanine to tRNA(Ala) in a two-step reaction: alanine is first activated by ATP to form Ala-AMP and then transferred to the acceptor end of tRNA(Ala). Also edits incorrectly charged Ser-tRNA(Ala) and Gly-tRNA(Ala) via its editing domain. The polypeptide is Alanine--tRNA ligase (Exiguobacterium sibiricum (strain DSM 17290 / CCUG 55495 / CIP 109462 / JCM 13490 / 255-15)).